The sequence spans 539 residues: MFFQGEGSIDIPVQDIISWIFDQARYEIEKPVYIDASNTSRSISWRQARTLVRQLAAGLRAAGLKDGDCVCLHSFNDIYYSILVLGIIAAGGIYMGTNPGYTSHELDYHLRVAQAKFVISDPEMLDRMIPAAEGNGIPKDRIWAFTTRESQVIATTGLAHWTALLNHGEADWRRLDDPNHAKTTVVARLFSSGTTGLPKPVDFTHYNIIAQHTLVYDAHPVPFETSRILSLPFFHAAAAPSAHFSALRLGDPSYVLRRFEPDLFLTTVAKHNITECTAVPPIILAILSHCTTPKYSNSLQSLKIVRCGAAPLDKTTQARFQSLLAPDATFTQVWGMTESSCIATMIPYPESDDTGSVGRLLPGMEAKIINTDGDDITAPDTTGEVCLRGPTVVRGYFNLPSANESAFDKDGFYRTGDLGYCDGKTRKWYLLDRKKDIIKVRGFQVAPAEVEGVLRNHPRIRDVAVVGVYDAEAKTEYPRAYVVRQDQSLQEEEVKEFVALRLAKYKRLDGGVRFVDAIPRNASGKILKRLLEDKRDEKL.

188–199 contributes to the AMP binding site; that stretch reads RLFSSGTTGLPK. The tract at residues 449 to 525 is AMP-binding; sequence EVEGVLRNHP…DAIPRNASGK (77 aa).

Belongs to the ATP-dependent AMP-binding enzyme family.

Its pathway is secondary metabolite biosynthesis. Its function is as follows. Phenylacetyl-CoA ligase; part of the gene cluster that mediates the biosynthesis of nigerpyrone and its derivatives carbonarone A and pestalamide A. The biosynthesis pathway begins with the polyketide assembly by epaA to form phenylacetyl triketide precursor from successive condensation of two malonyl-CoA, presumably with one phenylacetyl-CoA starter unit produced by the phenylacetyl-CoA ligase epaB. For the nigerpyrone biosynthesis, the reactive polyketide chain is released as an aldehyde through the R-domain. A nonenzymatic cyclization and dehydration may create nigerpyrone. For the biosynthesis of carbonarone A and pestalamide A, an extra methyl group is added through the C-methyltransferase domain. Several further steps involving the dehydrogenase orf1, the cytochrome P450 monooxygenase orf2 and the FAD-dependent monooxygenase orf3 are required to form a carbonarone A precursor which is converted to carbonarone A via cyclization. The O-acetyltransferase epaC could catalyze the transfer of 2-methylsuccinyl-CoA, a common intermediate in the ethylmalonyl-CoA pathway, to generate the final product pestalamide A. This Aspergillus niger (strain ATCC MYA-4892 / CBS 513.88 / FGSC A1513) protein is Phenylacetyl-CoA ligase epaB.